Here is a 615-residue protein sequence, read N- to C-terminus: Nuclear receptor subfamily 1 group D member 1 (615 aa).

Polar residues predominate over residues 1–12 (MTTLDSNNNTGG). Residues 1 to 70 (MTTLDSNNNT…TQDPARSFGS (70 aa)) are required for phosphorylation by CSNK1E and cytoplasmic localization. The segment at 1-120 (MTTLDSNNNT…SSRVSPSKGT (120 aa)) is disordered. Positions 1–129 (MTTLDSNNNT…TSNITKLNGM (129 aa)) are modulating. Positions 14–34 (ITYIGSSGSSPSRTSPESLYS) are enriched in low complexity. A compositionally biased stretch (polar residues) spans 35–48 (DSSNGSFQSLTQGC). Residues 49 to 285 (PTYFPPSPTG…PPRSPSPEPT (237 aa)) form a crucial for activation of GJA1 region. A phosphoserine; by GSK3-beta mark is found at Ser55 and Ser59. Residues 70–94 (SAPPSLSDDSSPSSASSSSSSSSSS) are compositionally biased toward low complexity. The segment at residues 130-206 (VLLCKVCGDV…VGMSRDAVRF (77 aa)) is a DNA-binding region (nuclear receptor). NR C4-type zinc fingers lie at residues 133–153 (CKVC…CEGC) and 170–194 (CLKN…FKKC). N6-acetyllysine; by KAT5 is present on residues Lys192 and Lys193. Disordered regions lie at residues 235 to 286 (LCPL…EPTM) and 312 to 337 (PGNF…SQGC). The span at 240–252 (TSPTPHPTSGSMG) shows a compositional bias: low complexity. The span at 253–262 (PSPPPAPAPT) shows a compositional bias: pro residues. Thr275 carries the phosphothreonine; by CDK1 modification. An NR LBD domain is found at 285–615 (TMEDVISQVA…KLLSFRVDAQ (331 aa)). The span at 312–328 (PGNFNANHASGSPSATT) shows a compositional bias: polar residues. Cys419 is a binding site for heme. The residue at position 592 (Lys592) is an N6-acetyllysine. His603 contributes to the heme binding site.

Belongs to the nuclear hormone receptor family. NR1 subfamily. In terms of assembly, binds DNA as a monomer or a homodimer. Interacts with NR2E3 and ZNHIT1. Interacts with C1D. Interacts with SP1. Interacts with OPHN1 (via C-terminus). Interacts with PER2; the interaction associates PER2 to BMAL1 promoter region. Interacts with CRY1. Interacts with CCAR2. Interacts with SIAH2. Interacts with FBXW7 and CDK1. Interacts with HUWE1. Interacts with NR0B2. Interacts with NFIL3. Interacts (via domain NR LBD) with HSP90AA1 and HSP90AB1. Ubiquitinated, leading to its proteasomal degradation. Ubiquitinated by the SCF(FBXW7) complex when phosphorylated by CDK1 leading to its proteasomal degradation. Ubiquitinated by SIAH2; leading to its proteasomal degradation. Rapidly ubiquitinated in response to inflammatory triggers and sumoylation is a prerequisite to its ubiquitination. Post-translationally, sumoylated by UBE2I, desumoylated by SENP1, and sumoylation is a prerequisite to its ubiquitination. In terms of processing, phosphorylated by CSNK1E; phosphorylation enhances its cytoplasmic localization. Undergoes lysosome-mediated degradation in a time-dependent manner in the liver. Expressed during adipocyte differentiation (at protein level). Expressed in skeletal muscle, bladder, lumbar spinal cord, pancreatic islets and hypothalamus. Expressed in developing and adult retina. In the adult retina, predominantly expressed in the outer nuclear layer, where rod and cone cells reside, and also localized to the ganglion cell layer. Expressed in a circadian manner in the liver. Expressed in a circadian manner in the lung with a peak between ZT8 and ZT12.

Its subcellular location is the nucleus. It localises to the cytoplasm. It is found in the cell projection. The protein localises to the dendrite. The protein resides in the dendritic spine. Functionally, transcriptional repressor which coordinates circadian rhythm and metabolic pathways in a heme-dependent manner. Integral component of the complex transcription machinery that governs circadian rhythmicity and forms a critical negative limb of the circadian clock by directly repressing the expression of core clock components BMAL1, CLOCK and CRY1. Also regulates genes involved in metabolic functions, including lipid and bile acid metabolism, adipogenesis, gluconeogenesis and the macrophage inflammatory response. Acts as a receptor for heme which stimulates its interaction with the NCOR1/HDAC3 corepressor complex, enhancing transcriptional repression. Recognizes two classes of DNA response elements within the promoter of its target genes and can bind to DNA as either monomers or homodimers, depending on the nature of the response element. Binds as a monomer to a response element composed of the consensus half-site motif 5'-[A/G]GGTCA-3' preceded by an A/T-rich 5' sequence (RevRE), or as a homodimer to a direct repeat of the core motif spaced by two nucleotides (RevDR-2). Acts as a potent competitive repressor of ROR alpha (RORA) function and regulates the levels of its ligand heme by repressing the expression of PPARGC1A, a potent inducer of heme synthesis. Regulates lipid metabolism by repressing the expression of APOC3 and by influencing the activity of sterol response element binding proteins (SREBPs); represses INSIG2 which interferes with the proteolytic activation of SREBPs which in turn govern the rhythmic expression of enzymes with key functions in sterol and fatty acid synthesis. Regulates gluconeogenesis via repression of G6PC1 and PEPCK and adipocyte differentiation via repression of PPARG. Regulates glucagon release in pancreatic alpha-cells via the AMPK-NAMPT-SIRT1 pathway and the proliferation, glucose-induced insulin secretion and expression of key lipogenic genes in pancreatic-beta cells. Positively regulates bile acid synthesis by increasing hepatic expression of CYP7A1 via repression of NR0B2 and NFIL3 which are negative regulators of CYP7A1. Modulates skeletal muscle oxidative capacity by regulating mitochondrial biogenesis and autophagy; controls mitochondrial biogenesis and respiration by interfering with the STK11-PRKAA1/2-SIRT1-PPARGC1A signaling pathway. Represses the expression of SERPINE1/PAI1, an important modulator of cardiovascular disease and the expression of inflammatory cytokines and chemokines in macrophages. Represses gene expression at a distance in macrophages by inhibiting the transcription of enhancer-derived RNAs (eRNAs). Plays a role in the circadian regulation of body temperature and negatively regulates thermogenic transcriptional programs in brown adipose tissue (BAT); imposes a circadian oscillation in BAT activity, increasing body temperature when awake and depressing thermogenesis during sleep. In concert with NR2E3, regulates transcriptional networks critical for photoreceptor development and function. In addition to its activity as a repressor, can also act as a transcriptional activator. In the ovarian granulosa cells acts as a transcriptional activator of STAR which plays a role in steroid biosynthesis. In collaboration with SP1, activates GJA1 transcription in a heme-independent manner. Represses the transcription of CYP2B10, CYP4A10 and CYP4A14. Represses the transcription of CES2. Represses and regulates the circadian expression of TSHB in a NCOR1-dependent manner. Negatively regulates the protein stability of NR3C1 and influences the time-dependent subcellular distribution of NR3C1, thereby affecting its transcriptional regulatory activity. Plays a critical role in the circadian control of neutrophilic inflammation in the lung; under resting, non-stress conditions, acts as a rhythmic repressor to limit inflammatory activity whereas in the presence of inflammatory triggers undergoes ubiquitin-mediated degradation thereby relieving inhibition of the inflammatory response. Plays a key role in the circadian regulation of microglial activation and neuroinflammation; suppresses microglial activation through the NF-kappaB pathway in the central nervous system. Plays a role in the regulation of the diurnal rhythms of lipid and protein metabolism in the skeletal muscle via transcriptional repression of genes controlling lipid and amino acid metabolism in the muscle. This Mus musculus (Mouse) protein is Nuclear receptor subfamily 1 group D member 1 (Nr1d1).